Consider the following 237-residue polypeptide: Large ribosomal subunit protein uL1 (237 aa).

It belongs to the universal ribosomal protein uL1 family. Part of the 50S ribosomal subunit.

Binds directly to 23S rRNA. The L1 stalk is quite mobile in the ribosome, and is involved in E site tRNA release. Functionally, protein L1 is also a translational repressor protein, it controls the translation of the L11 operon by binding to its mRNA. In Solibacter usitatus (strain Ellin6076), this protein is Large ribosomal subunit protein uL1.